The primary structure comprises 1053 residues: Carbamoyl phosphate synthase large chain (1053 aa).

Residues Met1–Asp397 form a carboxyphosphate synthetic domain region. 12 residues coordinate ATP: Arg127, Arg167, Gly173, Gly174, Glu206, Val208, Glu213, Gly239, Ile240, His241, Gln282, and Glu294. In terms of domain architecture, ATP-grasp 1 spans Arg131–Ile323. Residues Gln282, Glu294, and Asn296 each coordinate Mg(2+). Mn(2+) contacts are provided by Gln282, Glu294, and Asn296. An oligomerization domain region spans residues Thr398–Ile530. The carbamoyl phosphate synthetic domain stretch occupies residues Val531–Glu919. One can recognise an ATP-grasp 2 domain in the interval Ser661 to Ile852. ATP is bound by residues Arg697, Ser736, Leu738, Glu743, Gly768, Ile769, His770, Ser771, Gln811, and Glu823. Positions 811, 823, and 825 each coordinate Mg(2+). Mn(2+) contacts are provided by Gln811, Glu823, and Asn825. One can recognise an MGS-like domain in the interval Asn918–Arg1053. The allosteric domain stretch occupies residues Leu920–Arg1053.

Belongs to the CarB family. As to quaternary structure, composed of two chains; the small (or glutamine) chain promotes the hydrolysis of glutamine to ammonia, which is used by the large (or ammonia) chain to synthesize carbamoyl phosphate. Tetramer of heterodimers (alpha,beta)4. Mg(2+) is required as a cofactor. Mn(2+) serves as cofactor.

The catalysed reaction is hydrogencarbonate + L-glutamine + 2 ATP + H2O = carbamoyl phosphate + L-glutamate + 2 ADP + phosphate + 2 H(+). It catalyses the reaction hydrogencarbonate + NH4(+) + 2 ATP = carbamoyl phosphate + 2 ADP + phosphate + 2 H(+). It participates in amino-acid biosynthesis; L-arginine biosynthesis; carbamoyl phosphate from bicarbonate: step 1/1. Its pathway is pyrimidine metabolism; UMP biosynthesis via de novo pathway; (S)-dihydroorotate from bicarbonate: step 1/3. Its function is as follows. Large subunit of the glutamine-dependent carbamoyl phosphate synthetase (CPSase). CPSase catalyzes the formation of carbamoyl phosphate from the ammonia moiety of glutamine, carbonate, and phosphate donated by ATP, constituting the first step of 2 biosynthetic pathways, one leading to arginine and/or urea and the other to pyrimidine nucleotides. The large subunit (synthetase) binds the substrates ammonia (free or transferred from glutamine from the small subunit), hydrogencarbonate and ATP and carries out an ATP-coupled ligase reaction, activating hydrogencarbonate by forming carboxy phosphate which reacts with ammonia to form carbamoyl phosphate. This chain is Carbamoyl phosphate synthase large chain, found in Methanoregula boonei (strain DSM 21154 / JCM 14090 / 6A8).